The following is a 145-amino-acid chain: D-aminoacyl-tRNA deacylase (145 aa).

The short motif at 137-138 is the Gly-cisPro motif, important for rejection of L-amino acids element; that stretch reads GP.

It belongs to the DTD family. As to quaternary structure, homodimer.

Its subcellular location is the cytoplasm. It carries out the reaction glycyl-tRNA(Ala) + H2O = tRNA(Ala) + glycine + H(+). The enzyme catalyses a D-aminoacyl-tRNA + H2O = a tRNA + a D-alpha-amino acid + H(+). Its function is as follows. An aminoacyl-tRNA editing enzyme that deacylates mischarged D-aminoacyl-tRNAs. Also deacylates mischarged glycyl-tRNA(Ala), protecting cells against glycine mischarging by AlaRS. Acts via tRNA-based rather than protein-based catalysis; rejects L-amino acids rather than detecting D-amino acids in the active site. By recycling D-aminoacyl-tRNA to D-amino acids and free tRNA molecules, this enzyme counteracts the toxicity associated with the formation of D-aminoacyl-tRNA entities in vivo and helps enforce protein L-homochirality. The polypeptide is D-aminoacyl-tRNA deacylase (Lactobacillus gasseri (strain ATCC 33323 / DSM 20243 / BCRC 14619 / CIP 102991 / JCM 1131 / KCTC 3163 / NCIMB 11718 / NCTC 13722 / AM63)).